The chain runs to 99 residues: Acylphosphatase (99 aa).

The region spanning isoleucine 5–serine 97 is the Acylphosphatase-like domain. Residues arginine 20 and asparagine 38 contribute to the active site.

Belongs to the acylphosphatase family.

It carries out the reaction an acyl phosphate + H2O = a carboxylate + phosphate + H(+). The chain is Acylphosphatase (acyP) from Rhodopseudomonas palustris (strain BisB5).